The primary structure comprises 628 residues: MSEKKYTFETEVDKLLHLVIHSLYSNREIFLRELVSNSSDAIEKLRYESISNAALNEDDTDYAIRIDFDKDAKTITVSDNGIGMTEEEVIENLGTIAKSGTKKFLESLTGDKSKDNELIGQFGVGFYSSFIVADKVTVRTRKAGQDKSQATKWVSDAQNGFTVETITKEKRGTEVILHIKKEHLDLLEYHVLKGLVNKYSDCINTSIQMKKVEYDKDGKQTVKDEYETVNNTKAIWLRSKDEVTDEEYQEFYKYISHDFADALMWIHNKVEGNLEYNSLLYIPQNKPFDFWNRDKDYGLSLYVRRVFIMENKELLPPYLRFVKGVIDSADLPLNVSREILQHNKVIDKIKKAITTKILSELKKLASKDKEKYQKFWDSFGQVLKEGVSDDYSNKEKIAGLLRFATTQSGDSKQTVSLADYISRMKEGQDTIYYITSDSYKAAANNPQLEAFKKKGIEVILMTDRIDEWMMSTLTEFDGKHMKSIIKGDIDLDRFETPENKEKFEKEAKDFEKVLKEIKEVLKDKVEDVRLSKRLTDSPSCVVVNDYGMSLHMQKMMEEAGQSFMPGMGMKPILELNAEHNLVQKLKNEADTEIFADLSELLLLQAMFVEGAKIEDPMAFVKLVNKYIR.

Residues 1 to 337 (MSEKKYTFET…SADLPLNVSR (337 aa)) are a; substrate-binding. The b stretch occupies residues 338–554 (EILQHNKVID…DYGMSLHMQK (217 aa)). The segment at 555-628 (MMEEAGQSFM…FVKLVNKYIR (74 aa)) is c.

This sequence belongs to the heat shock protein 90 family. In terms of assembly, homodimer.

Its subcellular location is the cytoplasm. In terms of biological role, molecular chaperone. Has ATPase activity. The protein is Chaperone protein HtpG of Francisella tularensis subsp. tularensis (strain FSC 198).